Reading from the N-terminus, the 960-residue chain is MYRAGALVLRSATLRRTRFLAAHQNFATISSQRSSVLLAKSLESSIGGAGNQKKFYSSKDHDDPIAVDDSLELYKDLGGMSPIQVPADMPNVPILAINRYPLFPGFIKKVDIVKDDNLKALIRRQLSLKQPYAGVFVKKDDENKEETIVSLSEVYPTGSFVQIIEVRDQGSVLELVLSAHRRIRVIEPIEDVVAPKTDTPLNGRRARGKRAGLPPTPPPTPPLSTPTSAPEASATSPEEKEEKKDPERKGIVMVRTENVVADPVPKNNETKATMMAIVQTIRDVVQFNQLFGQQINLLLHPSQNVIDNPVYLCDLVATLVQSAETKDLQEMMDETDVSKRLKIALLLIQKEKAVAKLKHDINKDVEKKVQDHHRKYLLNEQLKVIKKELGIEKDEKTTIIEKIDERMKTLAVPEYALKVINEEKTKLQFLDPHSSEFSVTRNYLEWLTSVPWGLTSPENRRLSHAKKALDEGHYGMKDVKERIMEFIAVNLLRKSVGGKILCFHGPPGVGKTSIAKSIANALNREYFRFSVGGMTDVAEIKGHRRTYVGAMPGKMIQCMKKVKTENPLVLIDEVDKIGGAGFHGDPASALLELLDPEQNANFNDHFLDVPVDLSRVLFICTANEISKIPGPLRDRMEMIDVSGYLAEEKVAIAHQHLIPQLRKETSLSADQLNIEDSALEELIKHYCRESGVRNLQQHIERIFRKAALQIAEQQPEDEQPAATTAISENSDAEPVSTPSDPPTFTPEKINISTENLQKFVGRPKFTSDRMYEVTPPGVIMGLAWTAMGGSALYIETVLKRPVDVTSDKDGSIETTGNLGDVMKESVRTALTVSKGILAREQPDNKFFDKSHIHIHVPEGATPKDGPSAGVTLVSSLLSLALNRPVVQDMAMTGEISLTGKVLPVGGIREKIIAARRVGAKRVFLPAENRRDFDDLPEFMKSELDIRFVSHYDELYEHLFQ.

The N-terminal 56 residues, 1–56, are a transit peptide targeting the mitochondrion; that stretch reads MYRAGALVLRSATLRRTRFLAAHQNFATISSQRSSVLLAKSLESSIGGAGNQKKFY. A Lon N-terminal domain is found at 92 to 352; that stretch reads VPILAINRYP…IALLLIQKEK (261 aa). The segment at 195–250 is disordered; the sequence is PKTDTPLNGRRARGKRAGLPPTPPPTPPLSTPTSAPEASATSPEEKEEKKDPERKG. A compositionally biased stretch (pro residues) spans 214-224; the sequence is PPTPPPTPPLS. A compositionally biased stretch (low complexity) spans 225–236; it reads TPTSAPEASATS. The span at 237-250 shows a compositional bias: basic and acidic residues; that stretch reads PEEKEEKKDPERKG. ATP is bound at residue 505-512; sequence GPPGVGKT. Positions 712 to 748 are disordered; it reads EQQPEDEQPAATTAISENSDAEPVSTPSDPPTFTPEK. Residues 773-960 form the Lon proteolytic domain; that stretch reads VTPPGVIMGL…YDELYEHLFQ (188 aa). Active-site residues include S867 and K910.

This sequence belongs to the peptidase S16 family. As to quaternary structure, homohexamer or homoheptamer. Organized in a ring with a central cavity.

The protein localises to the mitochondrion matrix. The catalysed reaction is Hydrolysis of proteins in presence of ATP.. Functionally, ATP-dependent serine protease that mediates the selective degradation of misfolded, unassembled or oxidatively damaged polypeptides as well as certain short-lived regulatory proteins in the mitochondrial matrix. May also have a chaperone function in the assembly of inner membrane protein complexes. Participates in the regulation of mitochondrial gene expression and in the maintenance of the integrity of the mitochondrial genome. Binds to mitochondrial DNA in a site-specific manner. The protein is Lon protease homolog, mitochondrial of Caenorhabditis briggsae.